The primary structure comprises 156 residues: AP-1 complex subunit sigma-1 (156 aa).

This sequence belongs to the adaptor complexes small subunit family. Adaptor protein complex 1 (AP-1) is a heterotetramer composed of two large adaptins (gamma-type subunit and beta-type subunit), a medium adaptin (mu-type subunit) and a small adaptin (sigma-type subunit).

It localises to the golgi apparatus. The protein resides in the trans-Golgi network. The protein localises to the cytoplasmic vesicle. It is found in the clathrin-coated vesicle membrane. Functionally, subunit of clathrin-associated adaptor protein complex 1 that plays a role in protein sorting in the trans-Golgi network (TGN) and endosomes. The AP complexes mediate the recruitment of clathrin to membranes and the recognition of sorting signals within the cytosolic tails of transmembrane cargo molecules. Also involved in early steps of phagocytosis and macropinocytosis. The chain is AP-1 complex subunit sigma-1 (ap1s1) from Dictyostelium discoideum (Social amoeba).